Consider the following 351-residue polypeptide: Peptide chain release factor 1 (351 aa).

Gln229 carries the N5-methylglutamine modification.

This sequence belongs to the prokaryotic/mitochondrial release factor family. In terms of processing, methylated by PrmC. Methylation increases the termination efficiency of RF1.

It localises to the cytoplasm. Its function is as follows. Peptide chain release factor 1 directs the termination of translation in response to the peptide chain termination codons UAG and UAA. The chain is Peptide chain release factor 1 from Cereibacter sphaeroides (strain ATCC 17029 / ATH 2.4.9) (Rhodobacter sphaeroides).